Reading from the N-terminus, the 187-residue chain is Putative manganese efflux pump MntP (187 aa).

A run of 6 helical transmembrane segments spans residues 8–28 (FLSI…GFII), 39–59 (IALF…LTGL), 65–85 (LANF…GKMI), 106–126 (LFAL…GLSV), 131–151 (ILLA…IGVF), and 166–186 (ILGG…GLII).

This sequence belongs to the MntP (TC 9.B.29) family.

It localises to the cell inner membrane. In terms of biological role, probably functions as a manganese efflux pump. The protein is Putative manganese efflux pump MntP of Rippkaea orientalis (strain PCC 8801 / RF-1) (Cyanothece sp. (strain PCC 8801)).